Here is a 191-residue protein sequence, read N- to C-terminus: Small ribosomal subunit protein uS5 (191 aa).

The tract at residues 1–20 (MAAERERGGRERSRDREERD) is disordered. The S5 DRBM domain maps to 23–86 (FVDKLVHINR…EAAKRNLTRV (64 aa)).

This sequence belongs to the universal ribosomal protein uS5 family. Part of the 30S ribosomal subunit. Contacts proteins S4 and S8.

Functionally, with S4 and S12 plays an important role in translational accuracy. Its function is as follows. Located at the back of the 30S subunit body where it stabilizes the conformation of the head with respect to the body. The protein is Small ribosomal subunit protein uS5 of Rhodopseudomonas palustris (strain HaA2).